The primary structure comprises 151 residues: 3-dehydroquinate dehydratase 1 (151 aa).

Tyr-23 serves as the catalytic Proton acceptor. Substrate is bound by residues Asn-75, His-81, and Asp-88. His-101 functions as the Proton donor in the catalytic mechanism. Substrate-binding positions include 102–103 (LS) and Arg-112.

This sequence belongs to the type-II 3-dehydroquinase family. As to quaternary structure, homododecamer.

The enzyme catalyses 3-dehydroquinate = 3-dehydroshikimate + H2O. Its pathway is metabolic intermediate biosynthesis; chorismate biosynthesis; chorismate from D-erythrose 4-phosphate and phosphoenolpyruvate: step 3/7. Functionally, catalyzes a trans-dehydration via an enolate intermediate. The chain is 3-dehydroquinate dehydratase 1 (aroQ1) from Pseudomonas putida (strain ATCC 47054 / DSM 6125 / CFBP 8728 / NCIMB 11950 / KT2440).